The chain runs to 448 residues: NADH oxidase (448 aa).

FAD is bound by residues 7-11 (GSGAA), Cys42, Val80, 110-113 (ATGA), and Arg132. Cys42 (redox-active) is an active-site residue. Residues 152–167 (VAVVGAGAIGLEMAYG), Glu179, and Gly243 each bind NAD(+). Residues 271–281 (TSIPNIYAVGD), Gly299, and Thr300 contribute to the FAD site. Val328 is a binding site for NAD(+). Tyr423 lines the FAD pocket.

Belongs to the class-III pyridine nucleotide-disulfide oxidoreductase family. Requires FAD as cofactor.

It carries out the reaction 2 NADH + O2 + 2 H(+) = 2 NAD(+) + 2 H2O. In terms of biological role, catalyzes the four-electron reduction of molecular oxygen to water. This chain is NADH oxidase, found in Methanocaldococcus jannaschii (strain ATCC 43067 / DSM 2661 / JAL-1 / JCM 10045 / NBRC 100440) (Methanococcus jannaschii).